Here is a 322-residue protein sequence, read N- to C-terminus: Transaldolase (322 aa).

The Schiff-base intermediate with substrate role is filled by Lys-136.

It belongs to the transaldolase family. Type 1 subfamily. Homodimer.

Its subcellular location is the cytoplasm. The catalysed reaction is D-sedoheptulose 7-phosphate + D-glyceraldehyde 3-phosphate = D-erythrose 4-phosphate + beta-D-fructose 6-phosphate. It functions in the pathway carbohydrate degradation; pentose phosphate pathway; D-glyceraldehyde 3-phosphate and beta-D-fructose 6-phosphate from D-ribose 5-phosphate and D-xylulose 5-phosphate (non-oxidative stage): step 2/3. In terms of biological role, transaldolase is important for the balance of metabolites in the pentose-phosphate pathway. The protein is Transaldolase of Xanthomonas oryzae pv. oryzae (strain MAFF 311018).